The sequence spans 282 residues: Pantothenate synthetase (282 aa).

30-37 (MGYLHEGH) is a binding site for ATP. His-37 acts as the Proton donor in catalysis. Residue Gln-61 participates in (R)-pantoate binding. Gln-61 provides a ligand contact to beta-alanine. 147-150 (GQKD) lines the ATP pocket. Gln-153 contributes to the (R)-pantoate binding site. ATP is bound by residues Val-176 and 184–187 (MSSR).

The protein belongs to the pantothenate synthetase family. Homodimer.

The protein resides in the cytoplasm. The enzyme catalyses (R)-pantoate + beta-alanine + ATP = (R)-pantothenate + AMP + diphosphate + H(+). Its pathway is cofactor biosynthesis; (R)-pantothenate biosynthesis; (R)-pantothenate from (R)-pantoate and beta-alanine: step 1/1. Its function is as follows. Catalyzes the condensation of pantoate with beta-alanine in an ATP-dependent reaction via a pantoyl-adenylate intermediate. The chain is Pantothenate synthetase from Caldicellulosiruptor bescii (strain ATCC BAA-1888 / DSM 6725 / KCTC 15123 / Z-1320) (Anaerocellum thermophilum).